The chain runs to 541 residues: Pseudokinase FAM20A (541 aa).

The signal sequence occupies residues 1-33 (MPGLRRDRLLALLLLGALFSADLYFHLWPQVQR). N-linked (GlcNAc...) asparagine glycans are attached at residues N70, N145, and N287. 4 cysteine pairs are disulfide-bonded: C314–C330, C319–C323, C378–C452, and C453–C512. N388 is a glycosylation site (N-linked (GlcNAc...) asparagine). N-linked (GlcNAc...) asparagine glycosylation occurs at N538.

It belongs to the FAM20 family. As to quaternary structure, interacts with FAM20C; probably forming a heterotetramer of 2 subunits of FAM20A and 2 subunits of FAM20C. N-glycosylated. As to expression, in the mammary gland, expressed at higher levels in lactating mice than in virgin mice. Observed throughout the tissues of the mandibular incisor, including the secretory and maturation stage ameloblasts, the suprabasal layers of the gingival epithelium and the odontoblasts. Weak expression in the enamel matrix.

The protein localises to the secreted. The protein resides in the golgi apparatus. Its subcellular location is the endoplasmic reticulum. Its function is as follows. Pseudokinase that acts as an allosteric activator of the Golgi serine/threonine protein kinase FAM20C and is involved in biomineralization of teeth. Forms a complex with FAM20C and increases the ability of FAM20C to phosphorylate the proteins that form the 'matrix' that guides the deposition of the enamel minerals. The polypeptide is Pseudokinase FAM20A (Mus musculus (Mouse)).